Reading from the N-terminus, the 663-residue chain is MAAAAAAASLSVSDAAAKLPKPGGQVQRRRDRDRPRVDAAACTRDSRRPTRERCSTTVSLAATATATTATPVRAPVRTRAPMGQRKGADIVVEALERCGVRDVFEYPGGASMEIHQALTRSPVIRNHLLRHEQGEAFAASGYARSSGRPGVCVATSGPGATNLVSALADAHLDSVPLVAITGQAPRRMIGTDAFQETPIVEFTRSITKHNYLILDVDDIPRVINEAFFLASTGRPGPVLVDIPKDIQQQMAVPSWDAPMRLPGYISRLPKPPAANLLDEVIRLVGDAERPVLYVGGGCSASGYELRRFVELTGIPVTTTLMGIGNFPSDDPLSLRMLGMHGTVYANYAVDNADLLLALGVRFDDRVTGKVEAFASRAKIVHVDIDPSELGKNKQPHVSICADVKLALQGMNAMLEEQSAAAARKNLDFSAWRSELEKKKVEFPLGYRTFGEEIPPQYAIQVLDEVTNGEAIVATGVGQHQMWATQHYTYRRPRQWLSSAGLGAMGFGLPAAAGAAVANPGATVVDIDGDGSLLMNIQELAMVRVEDLPVKVMVLNNQHLGMVVQWEDRFYDANRAHTYLGNPAANGGGEVYPDFVTIAGGFGIPAARVTRKGEVRAAVEEMMAAPGPYLLDVVVPHQEHVLPMIPSNGAFKDIIVDGDGRSSY.

A compositionally biased stretch (low complexity) spans 1–26; sequence MAAAAAAASLSVSDAAAKLPKPGGQV. The segment at 1–56 is disordered; that stretch reads MAAAAAAASLSVSDAAAKLPKPGGQVQRRRDRDRPRVDAAACTRDSRRPTRERCST. A chloroplast-targeting transit peptide spans 1-79; sequence MAAAAAAASL…TPVRAPVRTR (79 aa). 2 stretches are compositionally biased toward basic and acidic residues: residues 28–37 and 44–54; these read RRRDRDRPRV and RDSRRPTRERC. Glu-132 lines the thiamine diphosphate pocket. Cys-152 and Cys-298 form a disulfide bridge. Residues Arg-234, 340-361, and 383-402 contribute to the FAD site; these read HGTVYANYAVDNADLLLALGVR and DIDPSELGKNKQPHVSICAD. The tract at residues 478-558 is thiamine pyrophosphate binding; that stretch reads QHQMWATQHY…VKVMVLNNQH (81 aa). Positions 529 and 556 each coordinate Mg(2+).

The protein belongs to the TPP enzyme family. The cofactor is Mg(2+). It depends on thiamine diphosphate as a cofactor.

It localises to the plastid. It is found in the chloroplast. The enzyme catalyses 2 pyruvate + H(+) = (2S)-2-acetolactate + CO2. It participates in amino-acid biosynthesis; L-isoleucine biosynthesis; L-isoleucine from 2-oxobutanoate: step 1/4. The protein operates within amino-acid biosynthesis; L-valine biosynthesis; L-valine from pyruvate: step 1/4. The sequence is that of Probable acetolactate synthase 2, chloroplastic (ALS2) from Oryza sativa subsp. japonica (Rice).